Reading from the N-terminus, the 48-residue chain is Probable protein E5A (48 aa).

The chain is Probable protein E5A from Bos taurus papillomavirus 4 (Bovine papillomavirus 4).